A 341-amino-acid polypeptide reads, in one-letter code: Fructose-1,6-bisphosphatase class 1 1 (341 aa).

Residues Glu-92, Asp-114, Leu-116, and Asp-117 each coordinate Mg(2+). Substrate contacts are provided by residues 117–120 (DGSS), Asn-209, and Lys-275. Position 281 (Glu-281) interacts with Mg(2+).

The protein belongs to the FBPase class 1 family. As to quaternary structure, homotetramer. Mg(2+) serves as cofactor.

It localises to the cytoplasm. The enzyme catalyses beta-D-fructose 1,6-bisphosphate + H2O = beta-D-fructose 6-phosphate + phosphate. It functions in the pathway carbohydrate biosynthesis; gluconeogenesis. In Leptothrix cholodnii (strain ATCC 51168 / LMG 8142 / SP-6) (Leptothrix discophora (strain SP-6)), this protein is Fructose-1,6-bisphosphatase class 1 1.